The primary structure comprises 159 residues: Ribosomal RNA large subunit methyltransferase H (159 aa).

Residues L76, G108, and 127–132 (FSKMTL) contribute to the S-adenosyl-L-methionine site.

Belongs to the RNA methyltransferase RlmH family. Homodimer.

Its subcellular location is the cytoplasm. The enzyme catalyses pseudouridine(1915) in 23S rRNA + S-adenosyl-L-methionine = N(3)-methylpseudouridine(1915) in 23S rRNA + S-adenosyl-L-homocysteine + H(+). In terms of biological role, specifically methylates the pseudouridine at position 1915 (m3Psi1915) in 23S rRNA. This is Ribosomal RNA large subunit methyltransferase H from Bacillus cytotoxicus (strain DSM 22905 / CIP 110041 / 391-98 / NVH 391-98).